The chain runs to 122 residues: MIQMQSILEVADNSGAKKVMCIKVLGGSHHMVAKLGDVIVVSVKDAIPGGKVKKGDVYKGVIVRTKTGVVRPDGSTIKFDQNALVLLNKQDEPIGTRVFGPVTRELRAKKYVRIMSLAEEVL.

This sequence belongs to the universal ribosomal protein uL14 family. As to quaternary structure, part of the 50S ribosomal subunit. Forms a cluster with proteins L3 and L19. In the 70S ribosome, L14 and L19 interact and together make contacts with the 16S rRNA in bridges B5 and B8.

Functionally, binds to 23S rRNA. Forms part of two intersubunit bridges in the 70S ribosome. This chain is Large ribosomal subunit protein uL14, found in Rickettsia africae (strain ESF-5).